A 205-amino-acid chain; its full sequence is DNA-directed RNA polymerase RPB5 homolog (205 aa).

This sequence belongs to the archaeal RpoH/eukaryotic RPB5 RNA polymerase subunit family. In terms of assembly, part of the viral DNA-directed RNA polymerase that consists of 8 polII-like subunits (RPB1, RPB2, RPB3, RPB5, RPB6, RPB7, RPB9, RPB10), a capping enzyme and a termination factor.

It is found in the host cytoplasm. It localises to the virion. Component of the DNA-directed RNA polymerase (RNAP) that catalyzes the transcription in the cytoplasm of viral DNA into RNA using the four ribonucleoside triphosphates as substrates. This chain is DNA-directed RNA polymerase RPB5 homolog, found in African swine fever virus (isolate Pig/Kenya/KEN-50/1950) (ASFV).